The sequence spans 390 residues: Adherens junction-associated protein 1 (390 aa).

The signal sequence occupies residues 1-37; that stretch reads MWITQLLGIRSGPPLGSHAWILIAIFQLAMDFIICES. The Extracellular segment spans residues 38-262; sequence ESPGKAYKHL…NDTSGLAVHQ (225 aa). Residues 218-253 are disordered; the sequence is LQNPGIHNGKKSPGRISTTDPNPGNGKTARPPRIPN. Residues 263–283 traverse the membrane as a helical segment; sequence IITITVSLIMVIAALITTLVL. Residues 283–390 are targeting signals; that stretch reads LKNCCAQSGN…VSEKWFEISC (108 aa). Topologically, residues 284 to 390 are cytoplasmic; the sequence is KNCCAQSGNA…VSEKWFEISC (107 aa).

The protein localises to the basolateral cell membrane. It localises to the apical cell membrane. Its subcellular location is the cell junction. It is found in the adherens junction. May play a role in cell adhesion and cell migration. This Xenopus tropicalis (Western clawed frog) protein is Adherens junction-associated protein 1 (ajap1).